A 50-amino-acid chain; its full sequence is Sperm protamine P1 (50 aa).

It belongs to the protamine P1 family. In terms of tissue distribution, testis.

Its subcellular location is the nucleus. The protein localises to the chromosome. Functionally, protamines substitute for histones in the chromatin of sperm during the haploid phase of spermatogenesis. They compact sperm DNA into a highly condensed, stable and inactive complex. This chain is Sperm protamine P1 (PRM1), found in Trachypithecus vetulus (Purple-faced langur).